Consider the following 519-residue polypeptide: Cytosol aminopeptidase (519 aa).

Ser42 carries the post-translational modification Phosphoserine. Lys45 bears the N6-succinyllysine mark. Ser54 carries the phosphoserine modification. An N6-succinyllysine mark is found at Lys61 and Lys103. A phosphoserine mark is found at Ser180 and Ser194. Positions 202, 203, and 205 each coordinate Zn(2+). N6-acetyllysine; alternate is present on Lys221. Lys221 is subject to N6-succinyllysine; alternate. At Ser238 the chain carries Phosphoserine. 2 residues coordinate Zn(2+): Lys282 and Asp287. Substrate contacts are provided by Lys282, Asp287, Ser292, and Lys294. Asp287 provides a ligand contact to Mg(2+). Lys294 is an active-site residue. Zn(2+)-binding residues include Arg303, Asp305, Asp364, and Glu366. Substrate is bound by residues Asp305 and Asp364. 2 residues coordinate Mg(2+): Asp364 and Glu366. Arg368 is a catalytic residue. Lys455 bears the N6-acetyllysine; alternate mark. Lys455 carries the N6-succinyllysine; alternate modification. Lys476 carries the post-translational modification N6-succinyllysine. Residue Lys489 is modified to N6-acetyllysine; alternate. N6-succinyllysine; alternate is present on Lys489.

The protein belongs to the peptidase M17 family. Homohexamer. It depends on Zn(2+) as a cofactor. The cofactor is Mn(2+).

It is found in the cytoplasm. The catalysed reaction is Release of an N-terminal amino acid, Xaa-|-Yaa-, in which Xaa is preferably Leu, but may be other amino acids including Pro although not Arg or Lys, and Yaa may be Pro. Amino acid amides and methyl esters are also readily hydrolyzed, but rates on arylamides are exceedingly low.. The enzyme catalyses an S-substituted L-cysteinylglycine + H2O = an S-substituted L-cysteine + glycine. It carries out the reaction L-cysteinylglycine + H2O = L-cysteine + glycine. It catalyses the reaction S-benzyl-L-cysteinylglycine + H2O = S-benzyl-L-cysteine + glycine. The catalysed reaction is Release of N-terminal proline from a peptide.. Functionally, cytosolic metallopeptidase that catalyzes the removal of unsubstituted N-terminal hydrophobic amino acids from various peptides. The presence of Zn(2+) ions is essential for the peptidase activity, and the association with other cofactors can modulate the substrate spectificity of the enzyme. For instance, in the presence of Mn(2+), it displays a specific Cys-Gly hydrolyzing activity of Cys-Gly-S-conjugates. Involved in the metabolism of glutathione and in the degradation of glutathione S-conjugates, which may play a role in the control of the cell redox status. The sequence is that of Cytosol aminopeptidase from Homo sapiens (Human).